The following is a 246-amino-acid chain: Ribonuclease PH (246 aa).

Residues arginine 95 and 133–135 (GTR) contribute to the phosphate site.

This sequence belongs to the RNase PH family. In terms of assembly, homohexameric ring arranged as a trimer of dimers.

It carries out the reaction tRNA(n+1) + phosphate = tRNA(n) + a ribonucleoside 5'-diphosphate. Its function is as follows. Phosphorolytic 3'-5' exoribonuclease that plays an important role in tRNA 3'-end maturation. Removes nucleotide residues following the 3'-CCA terminus of tRNAs; can also add nucleotides to the ends of RNA molecules by using nucleoside diphosphates as substrates, but this may not be physiologically important. Probably plays a role in initiation of 16S rRNA degradation (leading to ribosome degradation) during starvation. The polypeptide is Ribonuclease PH (Bordetella bronchiseptica (strain ATCC BAA-588 / NCTC 13252 / RB50) (Alcaligenes bronchisepticus)).